The following is a 226-amino-acid chain: Putative pyridoxamine 5'-phosphate oxidase (226 aa).

16–19 (LNSH) serves as a coordination point for pyridoxal 5'-phosphate. 72–75 (RMVL) serves as a coordination point for FMN. Residue lysine 77 coordinates pyridoxal 5'-phosphate. FMN-binding positions include 87-88 (YT), 93-94 (RK), and glutamine 116. Pyridoxal 5'-phosphate-binding residues include tyrosine 134, arginine 138, and serine 142. FMN is bound by residues 151–152 (QS) and tryptophan 199. A pyridoxal 5'-phosphate-binding site is contributed by 205-207 (RLH). Residue arginine 209 coordinates FMN.

The protein belongs to the pyridoxamine 5'-phosphate oxidase family. Homodimer. FMN is required as a cofactor.

It carries out the reaction pyridoxamine 5'-phosphate + O2 + H2O = pyridoxal 5'-phosphate + H2O2 + NH4(+). The catalysed reaction is pyridoxine 5'-phosphate + O2 = pyridoxal 5'-phosphate + H2O2. The protein operates within cofactor metabolism; pyridoxal 5'-phosphate salvage; pyridoxal 5'-phosphate from pyridoxamine 5'-phosphate: step 1/1. Its pathway is cofactor metabolism; pyridoxal 5'-phosphate salvage; pyridoxal 5'-phosphate from pyridoxine 5'-phosphate: step 1/1. Functionally, catalyzes the oxidation of either pyridoxine 5'-phosphate (PNP) or pyridoxamine 5'-phosphate (PMP) into pyridoxal 5'-phosphate (PLP). The polypeptide is Putative pyridoxamine 5'-phosphate oxidase (Caenorhabditis elegans).